Reading from the N-terminus, the 358-residue chain is tRNA-specific 2-thiouridylase MnmA (358 aa).

ATP is bound by residues 8–15 (GLSGGVDS) and Leu-34. The active-site Nucleophile is Cys-95. Cysteines 95 and 194 form a disulfide. Position 120 (Gly-120) interacts with ATP. Residues 144 to 146 (KDQ) form an interaction with tRNA region. The active-site Cysteine persulfide intermediate is Cys-194. The interval 299–300 (RY) is interaction with tRNA.

The protein belongs to the MnmA/TRMU family.

It is found in the cytoplasm. It catalyses the reaction S-sulfanyl-L-cysteinyl-[protein] + uridine(34) in tRNA + AH2 + ATP = 2-thiouridine(34) in tRNA + L-cysteinyl-[protein] + A + AMP + diphosphate + H(+). Its function is as follows. Catalyzes the 2-thiolation of uridine at the wobble position (U34) of tRNA, leading to the formation of s(2)U34. In Synechocystis sp. (strain ATCC 27184 / PCC 6803 / Kazusa), this protein is tRNA-specific 2-thiouridylase MnmA.